A 409-amino-acid polypeptide reads, in one-letter code: 3-isopropylmalate dehydrogenase 1, chloroplastic (409 aa).

A chloroplast-targeting transit peptide spans 1–37 (MAAFLQTNISLNAIKIVPGKYSSLTDHQFRAPYRIRC). Residue Ser-74 is modified to Phosphoserine. 118–133 (IGGYKWDKNEKHLRPE) lines the NAD(+) pocket. Residues Arg-140, Arg-150, and Arg-178 each coordinate substrate. Asn-238 provides a ligand contact to NAD(+). Asp-268 lines the substrate pocket. Residue Asp-268 coordinates Mg(2+). Position 269 (Asn-269) interacts with NAD(+). Mg(2+)-binding residues include Asp-292 and Asp-296. 322 to 338 (EPIHGSAPDIAGQDKAN) serves as a coordination point for NAD(+).

This sequence belongs to the isocitrate and isopropylmalate dehydrogenases family. Homodimer. It depends on Mg(2+) as a cofactor. Mn(2+) serves as cofactor. In terms of tissue distribution, highly expressed in seedlings, leaves, stems and roots and, to a lower extent, in flowers, pollen and siliques.

The protein resides in the plastid. It is found in the chloroplast stroma. It carries out the reaction (2R,3S)-3-isopropylmalate + NAD(+) = 4-methyl-2-oxopentanoate + CO2 + NADH. The protein operates within amino-acid biosynthesis; L-leucine biosynthesis; L-leucine from 3-methyl-2-oxobutanoate: step 3/4. It functions in the pathway secondary metabolite biosynthesis. Regulated by a thiol-based redox modification; oxidation by CuCl(2) leads to a decreased activity. Its function is as follows. Involved in both glucosinolate and leucine biosynthesis; catalyzes the oxidative decarboxylation step in both leucine biosynthesis (primary metabolism) and methionine chain elongation of glucosinolates (specialized metabolism). Catalyzes the oxidation of 3-carboxy-2-hydroxy-4-methylpentanoate (3-isopropylmalate, 3-IPM) to 3-carboxy-4-methyl-2-oxopentanoate. The product decarboxylates to 4-methyl-2 oxopentanoate. Required during pollen development and involved in embryo sac development. More active on 3-isopropylmalate and NAD(+) than towards D-malate. This is 3-isopropylmalate dehydrogenase 1, chloroplastic from Arabidopsis thaliana (Mouse-ear cress).